Reading from the N-terminus, the 113-residue chain is Ferredoxin-1 (113 aa).

4Fe-4S ferredoxin-type domains lie at 2-30 and 31-60; these read TYIV…YEGE and NFLV…PDTE. [3Fe-4S] cluster is bound by residues C9 and C17. [4Fe-4S] cluster is bound by residues C21, C40, C43, and C46. [3Fe-4S] cluster is bound at residue C50.

The cofactor is [4Fe-4S] cluster. Requires [3Fe-4S] cluster as cofactor.

This is Ferredoxin-1 (fdxA) from Caulobacter vibrioides (strain ATCC 19089 / CIP 103742 / CB 15) (Caulobacter crescentus).